A 200-amino-acid polypeptide reads, in one-letter code: Interferon lambda-1 (200 aa).

The N-terminal stretch at methionine 1–alanine 19 is a signal peptide. N-linked (GlcNAc...) asparagine glycosylation occurs at asparagine 65. Cysteine 68 and cysteine 164 form a disulfide bridge.

Belongs to the lambda interferon family.

The protein localises to the secreted. Functionally, cytokine with antiviral, antitumour and immunomodulatory activities. Plays a critical role in the antiviral host defense, predominantly in the epithelial tissues. Acts as a ligand for the heterodimeric class II cytokine receptor composed of IL10RB and IFNLR1, and receptor engagement leads to the activation of the JAK/STAT signaling pathway resulting in the expression of IFN-stimulated genes (ISG), which mediate the antiviral state. Has a restricted receptor distribution and therefore restricted targets: is primarily active in epithelial cells and this cell type-selective action is because of the epithelial cell-specific expression of its receptor IFNLR1. Exerts an immunomodulatory effect by up-regulating MHC class I antigen expression. This Homo sapiens (Human) protein is Interferon lambda-1 (IFNL1).